A 295-amino-acid polypeptide reads, in one-letter code: Probable isochorismatase (295 aa).

Positions 1–21 are disordered; it reads MGIPKIAGYPLPTPAEFPDNR. Positions 207–286 constitute a Carrier domain; it reads EIRSQKPLTL…EWWLVIEQAR (80 aa). Serine 247 carries the O-(pantetheine 4'-phosphoryl)serine modification.

The protein belongs to the isochorismatase family. Pantetheine 4'-phosphate serves as cofactor.

The enzyme catalyses isochorismate + H2O = (2S,3S)-2,3-dihydroxy-2,3-dihydrobenzoate + pyruvate. The protein operates within siderophore biosynthesis; vulnibactin biosynthesis. Its function is as follows. Involved in the biosynthesis of the catechol siderophore vulnibactin. Vulnibactin is a chelating compound involved in transporting iron from the bacterial environment into the cell cytoplasm. This is Probable isochorismatase (venB) from Vibrio vulnificus (strain CMCP6).